The chain runs to 514 residues: Na(+)/H(+) antiporter NhaB (514 aa).

A run of 12 helical transmembrane segments spans residues 23 to 43 (LALLVFLIVNPFIFLANPFIA), 63 to 83 (PLLPGGLLAIEAVIIGMTSAA), 97 to 117 (LLLMFMVAGIYFMKQLLLFIF), 120 to 140 (LLLSIRSKMVLSLAFCVAAAF), 144 to 164 (FLDALTVVAVVISVAVGFYGI), 202 to 222 (LMMHAGVGTALGGVMTMVGEP), 238 to 258 (FFLRMSPVTVPVLVCGLLTCM), 303 to 323 (AIIGVWLVTALALHLAEVGLI), 357 to 377 (LTVFFSIVAVIIDQHLFAPII), 391 to 411 (LFYLFNGLLSSISDNVFVGTI), 447 to 467 (ATPNGQAAFLFLLTSALAPLI), and 475 to 495 (VWMALPYTIVLTLIGLLCVEF).

The protein belongs to the NhaB Na(+)/H(+) (TC 2.A.34) antiporter family.

Its subcellular location is the cell inner membrane. It carries out the reaction 2 Na(+)(in) + 3 H(+)(out) = 2 Na(+)(out) + 3 H(+)(in). Functionally, na(+)/H(+) antiporter that extrudes sodium in exchange for external protons. The polypeptide is Na(+)/H(+) antiporter NhaB (Salmonella heidelberg (strain SL476)).